The following is a 370-amino-acid chain: Histidinol-phosphate aminotransferase (370 aa).

Residue K220 is modified to N6-(pyridoxal phosphate)lysine.

This sequence belongs to the class-II pyridoxal-phosphate-dependent aminotransferase family. Histidinol-phosphate aminotransferase subfamily. In terms of assembly, homodimer. It depends on pyridoxal 5'-phosphate as a cofactor.

The catalysed reaction is L-histidinol phosphate + 2-oxoglutarate = 3-(imidazol-4-yl)-2-oxopropyl phosphate + L-glutamate. It participates in amino-acid biosynthesis; L-histidine biosynthesis; L-histidine from 5-phospho-alpha-D-ribose 1-diphosphate: step 7/9. In Granulibacter bethesdensis (strain ATCC BAA-1260 / CGDNIH1), this protein is Histidinol-phosphate aminotransferase.